The chain runs to 112 residues: uncharacterized protein (112 aa).

This is an uncharacterized protein from Methanocaldococcus jannaschii (strain ATCC 43067 / DSM 2661 / JAL-1 / JCM 10045 / NBRC 100440) (Methanococcus jannaschii).